Here is an 82-residue protein sequence, read N- to C-terminus: Sulfur carrier protein TusA (82 aa).

C17 acts as the Cysteine persulfide intermediate in catalysis.

The protein belongs to the sulfur carrier protein TusA family.

The protein resides in the cytoplasm. Sulfur carrier protein which probably makes part of a sulfur-relay system. This is Sulfur carrier protein TusA from Glaesserella parasuis serovar 5 (strain SH0165) (Haemophilus parasuis).